A 732-amino-acid polypeptide reads, in one-letter code: Polyribonucleotide nucleotidyltransferase (732 aa).

The Mg(2+) site is built by Asp489 and Asp495. A KH domain is found at 556 to 615 (PKIDTIQIDVDKIKIVIGKGGETIDKIIAETGVKIDIDEEGLVQIFSSDQAAIDRTKEII). An S1 motif domain is found at 625–693 (GEVYHAKVVR…DKGRVDASMK (69 aa)). Residues 691–732 (SMKALIPRPPKPEKKEEKASEAKEASNDQASKSQSETASEEK) form a disordered region. Over residues 700–716 (PKPEKKEEKASEAKEAS) the composition is skewed to basic and acidic residues. A compositionally biased stretch (polar residues) spans 717–732 (NDQASKSQSETASEEK).

This sequence belongs to the polyribonucleotide nucleotidyltransferase family. Mg(2+) is required as a cofactor.

It localises to the cytoplasm. It carries out the reaction RNA(n+1) + phosphate = RNA(n) + a ribonucleoside 5'-diphosphate. Functionally, involved in mRNA degradation. Catalyzes the phosphorolysis of single-stranded polyribonucleotides processively in the 3'- to 5'-direction. The protein is Polyribonucleotide nucleotidyltransferase of Streptococcus uberis (strain ATCC BAA-854 / 0140J).